A 105-amino-acid polypeptide reads, in one-letter code: Pyrimidine/purine nucleoside phosphorylase (105 aa).

The protein belongs to the nucleoside phosphorylase PpnP family.

It carries out the reaction a purine D-ribonucleoside + phosphate = a purine nucleobase + alpha-D-ribose 1-phosphate. The catalysed reaction is adenosine + phosphate = alpha-D-ribose 1-phosphate + adenine. The enzyme catalyses cytidine + phosphate = cytosine + alpha-D-ribose 1-phosphate. It catalyses the reaction guanosine + phosphate = alpha-D-ribose 1-phosphate + guanine. It carries out the reaction inosine + phosphate = alpha-D-ribose 1-phosphate + hypoxanthine. The catalysed reaction is thymidine + phosphate = 2-deoxy-alpha-D-ribose 1-phosphate + thymine. The enzyme catalyses uridine + phosphate = alpha-D-ribose 1-phosphate + uracil. It catalyses the reaction xanthosine + phosphate = alpha-D-ribose 1-phosphate + xanthine. Its function is as follows. Catalyzes the phosphorolysis of diverse nucleosides, yielding D-ribose 1-phosphate and the respective free bases. Can use uridine, adenosine, guanosine, cytidine, thymidine, inosine and xanthosine as substrates. Also catalyzes the reverse reactions. The protein is Pyrimidine/purine nucleoside phosphorylase of Paracidovorax citrulli (strain AAC00-1) (Acidovorax citrulli).